The following is a 674-amino-acid chain: MHLQISLLLLFCLNIVHGSDGYFSERYQKQSSIKGPPHFLPFNVKSQGVQMRGEQGPPGPPGPIGPRGQPGPAGKPGFGSPGPQGPPGPLGPPGFSTVGKLGMPGLPGKPGERGLNGEKGEAGPVGLPGARGPQGPPGIPGPAGLSVLGKPGPQGPPGAQGPRGPPGEKGEPGVPGINGQKGEMGFGVPGRPGNRGLPGPQGPQGLPGSAGIGKPGENGLPGQPGMKGDRGLPGARGEAGIPGPQGPPGEPGEVGIGKPGPMGPPGPAGIPGAKGLPGPAGLPGSPGLPGFGKPGLPGMKGHRGPEGPPGFPGPKGDQGPAGVPGELGPAGPQGNMGPQGLKGLPGENGLPGPKGDMGPVGPAGFPGAKGERGLPGLDGKPGYPGEQGLPGPKGHPGLPGQKGDTGHAGHPGLPGPVGPQGVKGVPGINGEPGPRGPSGIPGVRGPIGPPGMPGAPGAKGEAGAPGLPGPAGIVTKGLRGPMGPLGPPGPKGNSGEPGLPGPPGPPGPPGQSTIPEGYVKGESRELSGMSFMKAGANQALTGMPVSAFTVILSKAYPGATVPIKFDKILYNRQQHYDPRTGIFTCRIPGLYYFSYHVHAKGTNVWVALYKNGSPVMYTYDEYQKGYLDQASGSAVIDLMENDQVWLQLPNSESNGLYSSEYVHSSFSGFLFAQI.

An N-terminal signal peptide occupies residues 1–18 (MHLQISLLLLFCLNIVHG). The segment at 19 to 52 (SDGYFSERYQKQSSIKGPPHFLPFNVKSQGVQMR) is nonhelical region (NC2). Residues 49–517 (VQMRGEQGPP…PPGQSTIPEG (469 aa)) are disordered. The segment at 53–512 (GEQGPPGPPG…PGPPGPPGQS (460 aa)) is triple-helical region. A compositionally biased stretch (pro residues) spans 83–92 (PQGPPGPLGP). Residues 110-121 (PGERGLNGEKGE) are compositionally biased toward basic and acidic residues. 4 stretches are compositionally biased toward low complexity: residues 191–207 (RPGN…QGLP), 270–285 (IPGA…LPGS), 387–402 (QGLP…PGQK), and 437–446 (PSGIPGVRGP). Hydroxyproline is present on residues Pro453 and Pro456. Positions 455-482 (APGAKGEAGAPGLPGPAGIVTKGLRGPM) are enriched in low complexity. Residues 499 to 509 (LPGPPGPPGPP) show a composition bias toward pro residues. The interval 513–674 (TIPEGYVKGE…SFSGFLFAQI (162 aa)) is nonhelical region (NC1). One can recognise a C1q domain in the interval 541–674 (TGMPVSAFTV…SFSGFLFAQI (134 aa)). Residues Asp620, Glu621, Leu627, and Asp628 each coordinate Ca(2+).

In terms of assembly, homotrimer. Prolines at the third position of the tripeptide repeating unit (G-X-Y) are hydroxylated in some or all of the chains.

It localises to the secreted. The protein resides in the extracellular space. The protein localises to the extracellular matrix. Its function is as follows. Type X collagen is a product of hypertrophic chondrocytes and has been localized to presumptive mineralization zones of hyaline cartilage. In Gallus gallus (Chicken), this protein is Collagen alpha-1(X) chain (COL10A1).